Consider the following 265-residue polypeptide: 3-methyl-2-oxobutanoate hydroxymethyltransferase (265 aa).

Mg(2+) is bound by residues D44 and D83. 3-methyl-2-oxobutanoate is bound by residues 44-45 (DS), D83, and K113. E115 is a Mg(2+) binding site. E183 acts as the Proton acceptor in catalysis.

This sequence belongs to the PanB family. In terms of assembly, homodecamer; pentamer of dimers. Mg(2+) serves as cofactor.

Its subcellular location is the cytoplasm. It carries out the reaction 3-methyl-2-oxobutanoate + (6R)-5,10-methylene-5,6,7,8-tetrahydrofolate + H2O = 2-dehydropantoate + (6S)-5,6,7,8-tetrahydrofolate. It participates in cofactor biosynthesis; (R)-pantothenate biosynthesis; (R)-pantoate from 3-methyl-2-oxobutanoate: step 1/2. In terms of biological role, catalyzes the reversible reaction in which hydroxymethyl group from 5,10-methylenetetrahydrofolate is transferred onto alpha-ketoisovalerate to form ketopantoate. The chain is 3-methyl-2-oxobutanoate hydroxymethyltransferase from Leptospira borgpetersenii serovar Hardjo-bovis (strain L550).